Here is a 303-residue protein sequence, read N- to C-terminus: Tyrosine-protein phosphatase 3 (303 aa).

Positions 24–292 constitute a Tyrosine-protein phosphatase domain; the sequence is YMIIEGLNEE…VFLYTVSQEL (269 aa). Cys227 functions as the Phosphocysteine intermediate in the catalytic mechanism.

This sequence belongs to the protein-tyrosine phosphatase family. Non-receptor class subfamily.

Its subcellular location is the cytoplasm. The catalysed reaction is O-phospho-L-tyrosyl-[protein] + H2O = L-tyrosyl-[protein] + phosphate. Functionally, contributes to dephosphorylation of tyrosine 15 of cdc2. The polypeptide is Tyrosine-protein phosphatase 3 (pyp3) (Schizosaccharomyces pombe (strain 972 / ATCC 24843) (Fission yeast)).